Here is an 89-residue protein sequence, read N- to C-terminus: MSLGTEEKQNLINTHQVHPTDTGSAEVQVAMLTTRISKLSTHLQGNIHDFSSRQGLLKMIGQRKRLLGYVRSKSEKRYTELIEKLAIRG.

Positions 1 to 23 (MSLGTEEKQNLINTHQVHPTDTG) are disordered. A compositionally biased stretch (polar residues) spans 10–23 (NLINTHQVHPTDTG).

It belongs to the universal ribosomal protein uS15 family. Part of the 30S ribosomal subunit. Forms a bridge to the 50S subunit in the 70S ribosome, contacting the 23S rRNA.

Its function is as follows. One of the primary rRNA binding proteins, it binds directly to 16S rRNA where it helps nucleate assembly of the platform of the 30S subunit by binding and bridging several RNA helices of the 16S rRNA. In terms of biological role, forms an intersubunit bridge (bridge B4) with the 23S rRNA of the 50S subunit in the ribosome. This is Small ribosomal subunit protein uS15 from Prochlorococcus marinus (strain NATL2A).